Consider the following 2157-residue polypeptide: MEDPYRVYLFGDQTGDFEVGLRRLLQAKNHSLLSSFLQRSYHAVRQEISHLPPSERSTFPRFTSIGDLLARHCESPGNPAIESVLTCIYQLGCFINYYGDLGHTFPSHSQSQLVGLCTGLLSCAAVSCASNIGELLKPAVEVVVVALRLGLCVYRVRKLFGQDQAAPLSWSALVSGLSESEGTSLIDKFTRRNVIPPSSRPYISAVCANTLTISGPPVVLNQFLDTFISGKNKAVMVPIHGPFHASHLYEKRDVEWILKSCNVETIRNHKPRIPVLSSNTGELIVVENMEGFLKIALEEILLRQMSWDKVTDSCISILKSVGDNKPKKLLPISSTATQSLFNSLKKSNLVNIEVDGGISDFAAETQLVNQTGRAELSKIAIIGMSGRFPEADSPQDFWNLLYKGLDVHRKVPEDRWDADAHVDLTGTATNTSKVPYGCWIREPGLFDPRFFNMSPREALQADPAQRLALLTAYEALEGAGFVPDSTPSTQRDRVGIFYGMTSDDYREVNSGQDIDTYFIPGGNRAFTPGRINYYFKFSGPSVSVDTACSSSLAAIHLACNSIWRNDCDTAITGGVNILTNPDNHAGLDRGHFLSRTGNCNTFDDGADGYCRADGVGTVVLKRLEDALADNDPILGVINGAYTNHSAEAVSITRPHVGAQAFIFKKLLNEANVDPKNISYIEMHGTGTQAGDAVEMQSVLDVFAPDHRRGPGQSLHLGSAKSNIGHGESASGVTSLVKVLLMMKENMIPPHCGIKTKINHNFPTDLAQRNVHIALQPTAWNRPSFGKRQIFLNNFSAAGGNTALLLEDGPVSDPEGEDKRRTHVITLSARSQTALQNNIDALCQYISEQEKTFGVKDSNALPSLAYTTTARRIHHPFRVTAIGSSFQEMRDSLIASSRKEFVAVPAKTPGIGFLFTGQGAQYAAMGKQLYEDCSHFRSAIEHLDCISQGQDLPSILPLVDGSLPLSELSPVVVQLGTTCVQMALSSFWASLGITPSFVLGHSLGDFAAMNAAGVLSTSDTIYACGRRAQLLTERCQPGTHAMLAIKAPLVEVKQLLNEKVHDMACINSPSETVISGPKSSIDELSRACSEKGLKSTILTVPYAFHSAQVEPILEDLEKALQGITFNKPSVPFVSALLGEVITEAGSNILNAEYLVRHCRETVNFLSAFEAVRNAKLGGDQTLWLEVGPHTVCSGMVKATLGPQTTTMASLRRDEDTWKVLSNSLSSLYLAGVDINWKQYHQDFSSSHRVLPLPTYKWDLKNYWIPYRNNFCLTKGSSMSAASASLQPTFLTTSAQRVVESRDDGLTATVVVHNDIADPDLNRVIQGHKVNGAALCPSSLYADSAQTLAEYLIEKYKPELKGSGLDVCNVTVPKPLIAKTGKEQFRISATANWVDKHVSVQVFSVTAEGKKLIDHAHCEVKLFDCMAADLEWKRGSYLVKRSIELLENSAVKGDAHRLRRGMVYKLFSALVDYDENYQSIREVILDSEHHEATALVKFQAPQANFHRNPYWIDSFGHLSGFIMNASDGTDSKSQVFVNHGWDSMRCLKKFSADVTYRTYVRMQPWRDSIWAGNVYIFEGDDIIAVFGGVKFQALSRKILDIALPPAGLSKAQTSPIQSSAPQKPIETAKPTSRPAPPVTMKSFVKKSAGPSVVVRALNILASEVGLSESDMSDDLVFADYGVDSLLSLTVTGKYREELNLDMDSSVFIEHPTVGDFKRFVTQLSPSVASDSSSTDRESEYSFNGDSCSGLSSPASPGTVSPPNEKVIQIHENGTMKEIRAIIADEIGVSADEIKSDENLNELGMDSLLSLTVLGKIRESLDMDLPGEFFIENQTLDQIETALDLKPKAVPTAVPQSQPITLPQSQSTKQLSTRPTSSSDNHPPATSILLQGNPRTASKTLFLFPDGSGSATSYATIPGVSPNVAVYGLNCPYMKAPEKLTCSLDSLTTPYLAEIRRRQPTGPYNLGGWSAGGICAYDAARKLVLQQGEIVETLLLLDTPFPIGLEKLPPRLYSFFNSIGLFGEGKAAPPAWLLPHFLAFIDSLDAYKAVPLPFNEQEWKGKLPKTYLVWAKDGVCPKPGDPWPEPAEDGSKDPREMVWLLSNRTDLGPNGWDTLVGKENIGGITVIHDANHFTMTKGEKAKELATFMKNALGVCERRLV.

An N-terminal acylcarrier protein transacylase domain (SAT) region spans residues 8 to 244 (YLFGDQTGDF…VMVPIHGPFH (237 aa)). In terms of domain architecture, Ketosynthase family 3 (KS3) spans 376-807 (LSKIAIIGMS…GGNTALLLED (432 aa)). Catalysis depends on for beta-ketoacyl synthase activity residues Cys548, His683, and His725. Residues 912 to 1232 (FLFTGQGAQY…LSSLYLAGVD (321 aa)) form a malonyl-CoA:ACP transacylase (MAT) domain region. Catalysis depends on Ser1001, which acts as the For acyl/malonyl transferase activity. A product template (PT) domain region spans residues 1290–1603 (TTSAQRVVES…RKILDIALPP (314 aa)). An N-terminal hotdog fold region spans residues 1294–1425 (QRVVESRDDG…CEVKLFDCMA (132 aa)). Residues 1294-1598 (QRVVESRDDG…FQALSRKILD (305 aa)) enclose the PKS/mFAS DH domain. Catalysis depends on His1326, which acts as the Proton acceptor; for dehydratase activity. The interval 1453–1598 (AHRLRRGMVY…FQALSRKILD (146 aa)) is C-terminal hotdog fold. Residue Asp1511 is the Proton donor; for dehydratase activity of the active site. The segment at 1607–1638 (SKAQTSPIQSSAPQKPIETAKPTSRPAPPVTM) is disordered. The span at 1608–1619 (KAQTSPIQSSAP) shows a compositional bias: polar residues. One can recognise a Carrier 1 domain in the interval 1645–1722 (SAGPSVVVRA…DFKRFVTQLS (78 aa)). Position 1682 is an O-(pantetheine 4'-phosphoryl)serine (Ser1682). The disordered stretch occupies residues 1725–1760 (VASDSSSTDRESEYSFNGDSCSGLSSPASPGTVSPP). The span at 1741-1759 (NGDSCSGLSSPASPGTVSP) shows a compositional bias: polar residues. Positions 1767 to 1844 (IHENGTMKEI…QIETALDLKP (78 aa)) constitute a Carrier 2 domain. Position 1804 is an O-(pantetheine 4'-phosphoryl)serine (Ser1804). A disordered region spans residues 1847 to 1888 (VPTAVPQSQPITLPQSQSTKQLSTRPTSSSDNHPPATSILLQ). Polar residues predominate over residues 1851 to 1878 (VPQSQPITLPQSQSTKQLSTRPTSSSDN). Residues 1877 to 2149 (DNHPPATSIL…ELATFMKNAL (273 aa)) are claisen cyclase domain. Residue Ser1967 is the For thioesterase activity of the active site.

Pantetheine 4'-phosphate serves as cofactor.

The catalysed reaction is 6 malonyl-CoA + acetyl-CoA + 6 H(+) = naphtopyrone YWA1 + 6 CO2 + 7 CoA + H2O. Its pathway is polyketide biosynthesis; heptaketide naphthopyrone YWA1 biosynthesis. Its function is as follows. Non-reducing polyketide synthase that condenses acetate units to form a heptaketide naphthopyrene YWA1, a yellow pigment found in mature asexual spores (conidia), via a polyketomethylene intermediate step. The polypeptide is Conidial yellow pigment biosynthesis polyketide synthase (Emericella nidulans (strain FGSC A4 / ATCC 38163 / CBS 112.46 / NRRL 194 / M139) (Aspergillus nidulans)).